The sequence spans 21 residues: Thanatin (21 aa).

A disulfide bridge connects residues C11 and C18.

The protein resides in the secreted. In terms of biological role, insect defense peptide with a broad spectrum of activity against Gram-positive and Gram-negative bacteria and fungi. No activity against S.aureus. Stops respiration in bacteria but does not permeabilize their inner membranes. In Podisus maculiventris (Spined soldier bug), this protein is Thanatin.